A 113-amino-acid polypeptide reads, in one-letter code: Nucleoid-associated protein sync_0026 (113 aa).

Belongs to the YbaB/EbfC family. In terms of assembly, homodimer.

It is found in the cytoplasm. It localises to the nucleoid. Binds to DNA and alters its conformation. May be involved in regulation of gene expression, nucleoid organization and DNA protection. This Synechococcus sp. (strain CC9311) protein is Nucleoid-associated protein sync_0026.